Reading from the N-terminus, the 191-residue chain is Small ribosomal subunit protein uS5 (191 aa).

An S5 DRBM domain is found at 21–84 (LVDKLVTINR…ERAKRTMIRV (64 aa)). Residues 161–191 (PRHVASRRGKKAAELFGKREQGQTEAEVTNG) are disordered. Over residues 171–182 (KAAELFGKREQG) the composition is skewed to basic and acidic residues.

This sequence belongs to the universal ribosomal protein uS5 family. Part of the 30S ribosomal subunit. Contacts proteins S4 and S8.

Functionally, with S4 and S12 plays an important role in translational accuracy. In terms of biological role, located at the back of the 30S subunit body where it stabilizes the conformation of the head with respect to the body. The polypeptide is Small ribosomal subunit protein uS5 (Gluconobacter oxydans (strain 621H) (Gluconobacter suboxydans)).